The primary structure comprises 421 residues: Medium-chain specific acyl-CoA dehydrogenase, mitochondrial (421 aa).

Residues 1-25 (MAAAFGRCCRVLRSISRFHWRSQHT) constitute a mitochondrion transit peptide. Lys69 is modified (N6-acetyllysine; alternate). Position 69 is an N6-succinyllysine; alternate (Lys69). Residue 158–167 (YCVTEPGAGS) participates in FAD binding. Ser167 is an octanoyl-CoA binding site. Position 179 is an N6-succinyllysine (Lys179). An FAD-binding site is contributed by 191-193 (WIT). An N6-acetyllysine; alternate mark is found at Lys212, Lys217, Lys259, and Lys271. An N6-succinyllysine; alternate mark is found at Lys212, Lys217, Lys259, and Lys271. Asp278 serves as a coordination point for octanoyl-CoA. Residue Lys279 is modified to N6-acetyllysine. Arg281 contributes to the octanoyl-CoA binding site. Lys301 is modified (N6-acetyllysine). FAD-binding positions include 306-308 (RKT) and 316-317 (HQ). 2 residues coordinate octanoyl-CoA: Arg349 and Thr351. Thr351 is subject to Phosphothreonine. Residue 374-378 (QIFGG) participates in FAD binding. Position 401 (Glu401) interacts with octanoyl-CoA. Glu401 serves as the catalytic Proton acceptor. 402–405 (GTSQ) is an FAD binding site.

Belongs to the acyl-CoA dehydrogenase family. In terms of assembly, homotetramer. Interacts with the heterodimeric electron transfer flavoprotein ETF. The cofactor is FAD. Post-translationally, acetylated. Could occur at proximity of the cofactor-binding sites and reduce the catalytic activity. Could be deacetylated by SIRT3.

The protein localises to the mitochondrion matrix. It catalyses the reaction a medium-chain 2,3-saturated fatty acyl-CoA + oxidized [electron-transfer flavoprotein] + H(+) = a medium-chain (2E)-enoyl-CoA + reduced [electron-transfer flavoprotein]. The catalysed reaction is pentanoyl-CoA + oxidized [electron-transfer flavoprotein] + H(+) = (2E)-pentenoyl-CoA + reduced [electron-transfer flavoprotein]. The enzyme catalyses hexanoyl-CoA + oxidized [electron-transfer flavoprotein] + H(+) = (2E)-hexenoyl-CoA + reduced [electron-transfer flavoprotein]. It carries out the reaction octanoyl-CoA + oxidized [electron-transfer flavoprotein] + H(+) = (2E)-octenoyl-CoA + reduced [electron-transfer flavoprotein]. It catalyses the reaction decanoyl-CoA + oxidized [electron-transfer flavoprotein] + H(+) = (2E)-decenoyl-CoA + reduced [electron-transfer flavoprotein]. The catalysed reaction is dodecanoyl-CoA + oxidized [electron-transfer flavoprotein] + H(+) = (2E)-dodecenoyl-CoA + reduced [electron-transfer flavoprotein]. The enzyme catalyses tetradecanoyl-CoA + oxidized [electron-transfer flavoprotein] + H(+) = (2E)-tetradecenoyl-CoA + reduced [electron-transfer flavoprotein]. It carries out the reaction oxidized [electron-transfer flavoprotein] + hexadecanoyl-CoA + H(+) = (2E)-hexadecenoyl-CoA + reduced [electron-transfer flavoprotein]. Its pathway is lipid metabolism; mitochondrial fatty acid beta-oxidation. Functionally, medium-chain specific acyl-CoA dehydrogenase is one of the acyl-CoA dehydrogenases that catalyze the first step of mitochondrial fatty acid beta-oxidation, an aerobic process breaking down fatty acids into acetyl-CoA and allowing the production of energy from fats. The first step of fatty acid beta-oxidation consists in the removal of one hydrogen from C-2 and C-3 of the straight-chain fatty acyl-CoA thioester, resulting in the formation of trans-2-enoyl-CoA. Electron transfer flavoprotein (ETF) is the electron acceptor that transfers electrons to the main mitochondrial respiratory chain via ETF-ubiquinone oxidoreductase (ETF dehydrogenase). Among the different mitochondrial acyl-CoA dehydrogenases, medium-chain specific acyl-CoA dehydrogenase acts specifically on acyl-CoAs with saturated 6 to 12 carbons long primary chains. The chain is Medium-chain specific acyl-CoA dehydrogenase, mitochondrial from Macaca fascicularis (Crab-eating macaque).